A 498-amino-acid chain; its full sequence is Calcium uptake protein, mitochondrial (498 aa).

Residues 1 to 29 (MPALSHYRSVSSLPSVDRSFLLIQRLRIH) constitute a mitochondrion transit peptide. EF-hand domains follow at residues 216-241 (EFFM…VTLL), 243-278 (IPES…MRSQ), 329-364 (LTEE…AADA), and 437-472 (LSDN…RERD). The Ca(2+) site is built by Asp-222, Asp-224, Asp-226, Glu-233, Asp-256, Asp-258, Asn-260, Glu-262, and Glu-267. Ca(2+) contacts are provided by Asp-450, Asn-452, Asp-454, Asn-456, and Glu-461.

The protein belongs to the MICU1 family. MICU1 subfamily. As to expression, expressed in both green and non-green tissues, including roots, shoots, floral buds and pollen.

Its subcellular location is the mitochondrion inner membrane. The protein localises to the mitochondrion intermembrane space. Calcium-binding protein maintaining matrix calcium levels at low concentration. Regulates mitochondrial calcium dynamics in planta by restricting influx. The sequence is that of Calcium uptake protein, mitochondrial from Arabidopsis thaliana (Mouse-ear cress).